The sequence spans 1026 residues: Multidrug resistance protein MdtC (1026 aa).

11 helical membrane passes run 15–35 (ILIA…LPVA), 333–353 (EVEE…FLFL), 360–380 (LIPA…MYLC), 387–407 (LSLM…IVVL), 431–451 (VGFT…PLLL), 463–483 (FAVT…TLTP), 528–548 (LVGV…IAIP), 853–873 (LILI…LYES), 897–917 (LFNA…IGIV), 953–973 (PIMM…LSGG), and 984–1004 (ITIV…TPVV).

It belongs to the resistance-nodulation-cell division (RND) (TC 2.A.6) family. MdtC subfamily. In terms of assembly, part of a tripartite efflux system composed of MdtA, MdtB and MdtC. MdtC forms a heteromultimer with MdtB.

It is found in the cell inner membrane. This Salmonella schwarzengrund (strain CVM19633) protein is Multidrug resistance protein MdtC.